Here is a 91-residue protein sequence, read N- to C-terminus: LYR motif-containing protein 4 (91 aa).

Positions 6 and 44 each coordinate pantetheine 4'-phosphate. Lysine 47 is subject to N6-succinyllysine.

It belongs to the complex I LYR family. Homodimer. Component of the mitochondrial core iron-sulfur cluster (ISC) complex composed of NFS1, LYRM4, NDUFAB1, ISCU, FXN, and FDX2; this complex is a heterohexamer containing two copies of each monomer. Component of the cyteine desulfurase complex composed of NFS1, LYRM4 and NDUFAB1; this complex contributes to the stability and cysteine desulfurase activity of NFS1. Interacts with FXN; this interaction is nickel-dependent. Interacts with the cytoplasmic form of NFS1; the complex increases the stability of NFS1. Forms a complex with the cytoplasmic form of NFS1; this complex increases the stability and cysteine desulfurase activity of NFS1. Interacts with NFS1.

It localises to the mitochondrion. It is found in the nucleus. The protein operates within cofactor biosynthesis; iron-sulfur cluster biosynthesis. Its function is as follows. Stabilizing factor, of the core iron-sulfur cluster (ISC) assembly complex, that regulates, in association with NDUFAB1, the stability and the cysteine desulfurase activity of NFS1 and participates in the [2Fe-2S] clusters assembly on the scaffolding protein ISCU. The core iron-sulfur cluster (ISC) assembly complex is involved in the de novo synthesis of a [2Fe-2S] cluster, the first step of the mitochondrial iron-sulfur protein biogenesis. This process is initiated by the cysteine desulfurase complex (NFS1:LYRM4:NDUFAB1) that produces persulfide which is delivered on the scaffold protein ISCU in a FXN-dependent manner. Then this complex is stabilized by FDX2 which provides reducing equivalents to accomplish the [2Fe-2S] cluster assembly. Finally, the [2Fe-2S] cluster is transferred from ISCU to chaperone proteins, including HSCB, HSPA9 and GLRX5. May also participates in the iron-sulfur protein biogenesis in the cytoplasm through its interaction with the cytoplasmic form of NFS1. The chain is LYR motif-containing protein 4 from Bos taurus (Bovine).